Reading from the N-terminus, the 40-residue chain is Photosystem II reaction center protein J (40 aa).

Residues 8-28 (IPLWLIGTVTGIIVIGLLGVF) form a helical membrane-spanning segment.

The protein belongs to the PsbJ family. As to quaternary structure, PSII is composed of 1 copy each of membrane proteins PsbA, PsbB, PsbC, PsbD, PsbE, PsbF, PsbH, PsbI, PsbJ, PsbK, PsbL, PsbM, PsbT, PsbX, PsbY, PsbZ, Psb30/Ycf12, at least 3 peripheral proteins of the oxygen-evolving complex and a large number of cofactors. It forms dimeric complexes.

The protein localises to the plastid. The protein resides in the chloroplast thylakoid membrane. In terms of biological role, one of the components of the core complex of photosystem II (PSII). PSII is a light-driven water:plastoquinone oxidoreductase that uses light energy to abstract electrons from H(2)O, generating O(2) and a proton gradient subsequently used for ATP formation. It consists of a core antenna complex that captures photons, and an electron transfer chain that converts photonic excitation into a charge separation. The protein is Photosystem II reaction center protein J of Pinus thunbergii (Japanese black pine).